A 124-amino-acid polypeptide reads, in one-letter code: Urease subunit beta (124 aa).

Belongs to the urease beta subunit family. In terms of assembly, heterotrimer of UreA (gamma), UreB (beta) and UreC (alpha) subunits. Three heterotrimers associate to form the active enzyme.

The protein localises to the cytoplasm. It carries out the reaction urea + 2 H2O + H(+) = hydrogencarbonate + 2 NH4(+). The protein operates within nitrogen metabolism; urea degradation; CO(2) and NH(3) from urea (urease route): step 1/1. The sequence is that of Urease subunit beta from Ureaplasma parvum serovar 3 (strain ATCC 27815 / 27 / NCTC 11736).